The sequence spans 25 residues: Small ribosomal subunit protein eS32 (25 aa).

The interval 1 to 25 is disordered; the sequence is MRAKWRKKRMRRLKRKRRKMRQRSK.

It belongs to the eukaryotic ribosomal protein eS32 family. Component of the large ribosomal subunit.

The protein resides in the cytoplasm. In terms of biological role, component of the small ribosomal subunit. The ribosome is a large ribonucleoprotein complex responsible for the synthesis of proteins in the cell. In Cyprinus carpio (Common carp), this protein is Small ribosomal subunit protein eS32 (rpl41).